The sequence spans 126 residues: Small ribosomal subunit protein uS8 (126 aa).

It belongs to the universal ribosomal protein uS8 family. In terms of assembly, part of the 30S ribosomal subunit. Contacts proteins S5 and S12.

One of the primary rRNA binding proteins, it binds directly to 16S rRNA central domain where it helps coordinate assembly of the platform of the 30S subunit. The sequence is that of Small ribosomal subunit protein uS8 from Nitratidesulfovibrio vulgaris (strain DSM 19637 / Miyazaki F) (Desulfovibrio vulgaris).